The chain runs to 563 residues: Endoglucanase B (563 aa).

A signal peptide (or 31) is located at residues 1–27 (MKKFLVLLIALIMIATLLVVPGVQTSA). Glutamate 204 serves as the catalytic Proton donor. Glutamate 363 acts as the Nucleophile in catalysis. The disordered stretch occupies residues 476-495 (SVTPSPSATPSPTTITAPPT). Residues 496-562 (DTVTYGDVNG…VLRSISELPY (67 aa)) form the Dockerin domain.

It belongs to the glycosyl hydrolase 5 (cellulase A) family.

The enzyme catalyses Endohydrolysis of (1-&gt;4)-beta-D-glucosidic linkages in cellulose, lichenin and cereal beta-D-glucans.. In terms of biological role, this enzyme catalyzes the endohydrolysis of 1,4-beta-glucosidic linkages in cellulose, lichenin and cereal beta-D-glucans. The polypeptide is Endoglucanase B (celB) (Acetivibrio thermocellus (strain ATCC 27405 / DSM 1237 / JCM 9322 / NBRC 103400 / NCIMB 10682 / NRRL B-4536 / VPI 7372) (Clostridium thermocellum)).